Consider the following 263-residue polypeptide: Acetylglutamate kinase (263 aa).

Substrate-binding positions include 48 to 49 (GG), Arg70, and Asn162.

The protein belongs to the acetylglutamate kinase family. ArgB subfamily.

It localises to the cytoplasm. The catalysed reaction is N-acetyl-L-glutamate + ATP = N-acetyl-L-glutamyl 5-phosphate + ADP. It participates in amino-acid biosynthesis; L-arginine biosynthesis; N(2)-acetyl-L-ornithine from L-glutamate: step 2/4. Catalyzes the ATP-dependent phosphorylation of N-acetyl-L-glutamate. This Vibrio vulnificus (strain YJ016) protein is Acetylglutamate kinase.